Consider the following 228-residue polypeptide: Elongation factor 1-beta (228 aa).

Positions 74–116 (ASKAFTAYGPEGSEASANPKDKPAEEEEEEDLFASDSEDEDPA) are disordered. Residues 84–93 (EGSEASANPK) are igE-binding. Acidic residues predominate over residues 97–115 (AEEEEEEDLFASDSEDEDP).

Belongs to the EF-1-beta/EF-1-delta family. As to quaternary structure, EF-1 is composed of 4 subunits: alpha, beta, delta, and gamma.

Its function is as follows. EF-1-beta and EF-1-delta stimulate the exchange of GDP bound to EF-1-alpha to GTP. In Penicillium citrinum, this protein is Elongation factor 1-beta.